The following is a 316-amino-acid chain: D-alanine--D-alanine ligase (316 aa).

An ATP-grasp domain is found at 107–303; that stretch reads KEVFAARGLT…FEDLVERILI (197 aa). ATP is bound at residue 133–188; the sequence is AEGFGYPVVVKPSQEGSSVGVSIVKSPEELPSALELAFRYDDDILVERFIKGREIQ. Residues Asp-256, Glu-269, and Asn-271 each contribute to the Mg(2+) site.

It belongs to the D-alanine--D-alanine ligase family. It depends on Mg(2+) as a cofactor. Mn(2+) is required as a cofactor.

The protein resides in the cytoplasm. The enzyme catalyses 2 D-alanine + ATP = D-alanyl-D-alanine + ADP + phosphate + H(+). The protein operates within cell wall biogenesis; peptidoglycan biosynthesis. Cell wall formation. The chain is D-alanine--D-alanine ligase from Geobacter sulfurreducens (strain ATCC 51573 / DSM 12127 / PCA).